Here is a 434-residue protein sequence, read N- to C-terminus: MYKNQLQELAQRSCFNLPSYTCIREGPDHAPRFKATVNFNGEIFESPQYCSTLRQAEHSAAEVALNALSNRGPSHSLAARILDETGVYKNLLQEIAQRVGAPLPRYTTFRSGLGHQPVFTGTVELAGITFTGDPAKNKKQAEKNAAMAAWSSLKQLAKETSSSMPEPENIDELEQVIIARALINYRIKENIGTGSSSSAPVPFAKKFFMQNLRPTSPQPSPATTSRILPFICPKQPSRSSRSSLAATSGIDRIMAAALESRSYQRPQQRFANPPYVPMRQFRSQCHGMAPPVTIRTAVPVFSAPPMPPPPCTNNTQLPSSVYVPSLMRTAPPVRIAPPVTIRTAVPVFASAPPVRIRTAVKPTVEAGETRISSVQEKESIPVLPDSLEIGVEGSTITITDCEKTASKETERAEFKDSSKGEPETARERLENLKI.

DRBM domains lie at 1–70 (MYKN…ALSN) and 87–155 (VYKN…SLKQ). The disordered stretch occupies residues 402–434 (EKTASKETERAEFKDSSKGEPETARERLENLKI).

Heterodimer with DRB1 or DRB5. Interacts with DCL1 and DCL5.

It is found in the cytoplasm. In terms of biological role, binds double-stranded RNA. May be involved in RNA-mediated silencing. This Arabidopsis thaliana (Mouse-ear cress) protein is Double-stranded RNA-binding protein 2 (DRB2).